Here is a 383-residue protein sequence, read N- to C-terminus: Probable protein phosphatase 2C 13 (383 aa).

Positions 78 to 349 (RSGSFADIRS…DNMTVIVICF (272 aa)) constitute a PPM-type phosphatase domain. Mn(2+) contacts are provided by D121, G122, D297, and D340.

Belongs to the PP2C family. It depends on Mg(2+) as a cofactor. Requires Mn(2+) as cofactor.

It catalyses the reaction O-phospho-L-seryl-[protein] + H2O = L-seryl-[protein] + phosphate. The enzyme catalyses O-phospho-L-threonyl-[protein] + H2O = L-threonyl-[protein] + phosphate. The polypeptide is Probable protein phosphatase 2C 13 (Arabidopsis thaliana (Mouse-ear cress)).